The sequence spans 274 residues: Shikimate dehydrogenase (NADP(+)) (274 aa).

Residues 14–16 and threonine 60 contribute to the shikimate site; that span reads SKS. Lysine 64 acts as the Proton acceptor in catalysis. Glutamate 76 is a binding site for NADP(+). Shikimate contacts are provided by asparagine 85 and aspartate 101. Residues 126–130, 150–155, and methionine 214 each bind NADP(+); these read GAGGA and NRTARK. Tyrosine 216 contacts shikimate. Glycine 238 serves as a coordination point for NADP(+).

The protein belongs to the shikimate dehydrogenase family. As to quaternary structure, homodimer.

It carries out the reaction shikimate + NADP(+) = 3-dehydroshikimate + NADPH + H(+). Its pathway is metabolic intermediate biosynthesis; chorismate biosynthesis; chorismate from D-erythrose 4-phosphate and phosphoenolpyruvate: step 4/7. Functionally, involved in the biosynthesis of the chorismate, which leads to the biosynthesis of aromatic amino acids. Catalyzes the reversible NADPH linked reduction of 3-dehydroshikimate (DHSA) to yield shikimate (SA). This Pseudomonas aeruginosa (strain ATCC 15692 / DSM 22644 / CIP 104116 / JCM 14847 / LMG 12228 / 1C / PRS 101 / PAO1) protein is Shikimate dehydrogenase (NADP(+)).